Reading from the N-terminus, the 217-residue chain is Ras-related protein RABA1e (217 aa).

Residue 20 to 27 (GDSGVGKS) participates in GTP binding. An Effector region motif is present at residues 42–50 (SKSTIGVEF). Residues 68-72 (DTAGQ), 126-129 (NKAD), and 156-157 (SA) each bind GTP. Residues C214 and C215 are each lipidated (S-geranylgeranyl cysteine).

This sequence belongs to the small GTPase superfamily. Rab family.

It localises to the cell membrane. In terms of biological role, intracellular vesicle trafficking and protein transport. This chain is Ras-related protein RABA1e (RABA1E), found in Arabidopsis thaliana (Mouse-ear cress).